Consider the following 553-residue polypeptide: Putative transport protein ASA_0825 (553 aa).

5 helical membrane passes run 4–24 (IALSISMLSLVAVLGLWLGNW), 29–49 (VGLGIGGVLFGGIIVGHFAGV), 65–85 (FGLILFVYTIGIQVGPGFFSS), 95–115 (GFAALLVILGCVVAAGLHQLF), and 158–178 (MGYAVAYPFGICGILLTMWLV). 2 consecutive RCK C-terminal domains span residues 191 to 276 (DLFE…VLGE) and 279 to 361 (ETSL…VVGN). 6 consecutive transmembrane segments (helical) span residues 371-391 (MLPVFIGIGLGVLLGSIPFYL), 403-425 (AGGPLVVALILSRIGSIGKLYWF), 439-459 (IVLFLAVVGFKSGAGFVDTLI), 465-485 (AWMMYGMAITLIPLLVVGVLA), 493-513 (YLTLCGLLAGSMTDPPALAFA), and 533-553 (LVMFLRIISPQLLAILLWAGV).

This sequence belongs to the AAE transporter (TC 2.A.81) family. YidE subfamily.

The protein resides in the cell membrane. In Aeromonas salmonicida (strain A449), this protein is Putative transport protein ASA_0825.